We begin with the raw amino-acid sequence, 479 residues long: Alliin lyase (479 aa).

A signal peptide spans 1–25 (MESYDKVGSNKVPCLLILTCIIMSS). The propeptide occupies 26 to 34 (FVNNNIVQA). The EGF-like; atypical domain maps to 47–93 (EAVANINCSGHGRAFLDGILSDGSPKCECNTCYTGADCSEKITGCSA). Residue Asn-53 is glycosylated (N-linked (GlcNAc...) asparagine). Disulfide bonds link Cys-54–Cys-73, Cys-75–Cys-84, and Cys-78–Cys-91. Position 126-134 (126-134 (YFFNPVSNF)) interacts with chloride. N-linked (GlcNAc...) asparagine glycans are attached at residues Asn-180 and Asn-225. N6-(pyridoxal phosphate)lysine is present on Lys-285. Asn-342 and Asn-362 each carry an N-linked (GlcNAc...) asparagine glycan. A disulfide bridge links Cys-402 with Cys-410.

Belongs to the alliinase family. Homodimer. Pyridoxal 5'-phosphate serves as cofactor.

Its subcellular location is the vacuole. It catalyses the reaction an S-alkyl-L-cysteine S-oxide = an S-alkyl sulfenate + 2-aminoprop-2-enoate. The sequence is that of Alliin lyase from Allium cepa (Onion).